A 492-amino-acid chain; its full sequence is GDP-Man:Man(3)GlcNAc(2)-PP-Dol alpha-1,2-mannosyltransferase (492 aa).

Residues 1-19 (MAADTGSWCVYAVLRFFYS) lie on the Lumenal side of the membrane. Residues 20–40 (LFFPGLMICGVLCVYLVIGLW) form a helical membrane-spanning segment. At 41–233 (VIRWHLQRKK…SRNALLSKAK (193 aa)) the chain is on the cytoplasmic side. The segment at residues 234–254 (LIYYYLFAFVYGLVGSCSDIV) is an intramembrane region (helical). Residues 255-399 (MVNSSWTLNH…IGLHTMWNEH (145 aa)) lie on the Cytoplasmic side of the membrane. Residues 400–420 (FGIGVVECMAAGTVILAHNSG) constitute an intramembrane region (helical). Topologically, residues 421-492 (GPKLDIVIPH…FLCSMEKLLT (72 aa)) are cytoplasmic.

It belongs to the glycosyltransferase group 1 family. Glycosyltransferase 4 subfamily.

It is found in the endoplasmic reticulum membrane. It carries out the reaction an alpha-D-Man-(1-&gt;3)-[alpha-D-Man-(1-&gt;6)]-beta-D-Man-(1-&gt;4)-beta-D-GlcNAc-(1-&gt;4)-alpha-D-GlcNAc-diphospho-di-trans,poly-cis-dolichol + 2 GDP-alpha-D-mannose = an alpha-D-Man-(1-&gt;2)-alpha-D-Man-(1-&gt;2)-alpha-D-Man-(1-&gt;3)-[alpha-D-Man-(1-&gt;6)]-beta-D-Man-(1-&gt;4)-beta-D-GlcNAc-(1-&gt;4)-alpha-D-GlcNAc-diphospho-di-trans,poly-cis-dolichol + 2 GDP + 2 H(+). It functions in the pathway protein modification; protein glycosylation. Functionally, GDP-Man:Man(3)GlcNAc(2)-PP-Dol alpha-1,2-mannosyltransferase that operates in the biosynthetic pathway of dolichol-linked oligosaccharides, the glycan precursors employed in protein asparagine (N)-glycosylation. The assembly of dolichol-linked oligosaccharides begins on the cytosolic side of the endoplasmic reticulum membrane and finishes in its lumen. The sequential addition of sugars to dolichol pyrophosphate produces dolichol-linked oligosaccharides containing fourteen sugars, including two GlcNAcs, nine mannoses and three glucoses. Once assembled, the oligosaccharide is transferred from the lipid to nascent proteins by oligosaccharyltransferases. Catalyzes, on the cytoplasmic face of the endoplasmic reticulum, the addition of the fourth and fifth mannose residues to the dolichol-linked oligosaccharide chain, to produce Man(5)GlcNAc(2)-PP-dolichol core oligosaccharide. Man(5)GlcNAc(2)-PP-dolichol is a substrate for ALG3, the following enzyme in the biosynthetic pathway. The polypeptide is GDP-Man:Man(3)GlcNAc(2)-PP-Dol alpha-1,2-mannosyltransferase (Mus musculus (Mouse)).